A 3828-amino-acid polypeptide reads, in one-letter code: Histone-lysine N-methyltransferase trithorax (3828 aa).

3 disordered regions span residues 25 to 179, 356 to 390, and 512 to 589; these read EDEA…AAAA, AVKS…ATKQ, and FRKQ…RSTR. Positions 29–57 are enriched in low complexity; it reads ASAAAAAAAATAATTEQHQQSEQSAGSSA. Polar residues predominate over residues 77–89; it reads AATSGNRGASSGA. A compositionally biased stretch (low complexity) spans 101 to 114; that stretch reads GNGSSTGSKTTNGG. Acidic residues predominate over residues 152–165; it reads DGTEDTNNDDDDDS. Low complexity predominate over residues 359–387; the sequence is SSGSSPNPNHNPNAVAGSTSAAAPGAPTA. The segment covering 513 to 523 has biased composition (basic and acidic residues); the sequence is RKQEPQHKTPE. Residues 524–553 are compositionally biased toward acidic residues; that stretch reads DNDDDGSASSDAIEDDEDIDDDDAEENEEA. Over residues 554-581 the composition is skewed to basic and acidic residues; sequence ASEKSAETTASVDEKEADDRQLVMDKHF. A DNA-binding region (nuclear receptor) is located at residues 725–839; it reads ASTCAVCSAP…AGHRSRLSAI (115 aa). Disordered regions lie at residues 933–1036, 1075–1094, and 1131–1170; these read ESKE…SAVP, ELAA…TTSP, and AQPA…TTRN. Residues 960–974 show a composition bias toward basic and acidic residues; sequence AKQDKEKARELEAEK. Low complexity-rich tracts occupy residues 998 to 1022 and 1078 to 1094; these read ASTT…TNSS and AAEA…TTSP. A compositionally biased stretch (polar residues) spans 1140 to 1170; it reads ESRSSKSNTQTEAKKTPATSGSSKGKVTTRN. 3 consecutive PHD-type zinc fingers follow at residues 1251–1334, 1335–1380, and 1408–1469; these read RALC…CTVC, YTCN…CLKC, and GNFC…CARR. Positions 1483 to 1644 constitute a Bromo domain; sequence AVMEEFKSSL…SEQFPWFQNE (162 aa). A C2HC pre-PHD-type zinc finger spans residues 1708 to 1748; that stretch reads TRVCLFCRKSGEGLSGEEARLLYCGHDCWVHINCAMWSAEV. Residues 1769-1816 form a PHD-type 4 zinc finger; sequence IKCTVCGNRGATVGCNVKSCGEHYHYPCARTIDCAFLTDKSMYCPAHA. The 58-residue stretch at 1856–1913 folds into the FYR N-terminal domain; it reads KVQFHIGSVAVRQLGSIVPRFSDSFEAIVPINFLCSRLYWSSKEPWKIVEYTVRTTIQ. Disordered regions lie at residues 2252–2272, 2464–2510, 2826–2848, 2897–2973, 2988–3031, 3117–3178, 3314–3338, and 3457–3487; these read CEPM…AQLS, AHQK…QQQQ, RNTN…PQQS, RQQQ…SPAA, APAP…QLSM, ASAN…VPAG, NGSG…DDDD, and KLDV…PMRD. Low complexity-rich tracts occupy residues 2253-2268, 2483-2510, and 2836-2848; these read EPMS…ATGT, QGQQ…QQQQ, and SVLS…PQQS. The segment covering 2897 to 2917 has biased composition (polar residues); that stretch reads RQQQANELKNKQAAGQQTGST. Low complexity-rich tracts occupy residues 2956–2973, 2988–2997, 3005–3031, and 3117–3132; these read ATSA…SPAA, APAPQPQQQE, LHQQ…QLSM, and ASAN…QQNS. A compositionally biased stretch (polar residues) spans 3148-3164; the sequence is QQRQEPTPLSNDVVVQS. Acidic residues predominate over residues 3328 to 3338; that stretch reads DDAEEDEDDDD. In terms of domain architecture, FYR C-terminal spans 3493-3577; the sequence is GPHLLYEIQS…EKCVKYTPKY (85 aa). An SET domain is found at 3690 to 3806; that stretch reads DYVGVFRSHI…QGEELTYDYK (117 aa). Residues histidine 3700, arginine 3702, tyrosine 3744, and 3767-3768 each bind S-adenosyl-L-methionine; that span reads NH. Cysteine 3770, cysteine 3816, cysteine 3818, and cysteine 3823 together coordinate Zn(2+). Residues 3812–3828 enclose the Post-SET domain; it reads EKIPCSCGSKRCRKYLN.

It belongs to the class V-like SAM-binding methyltransferase superfamily. Histone-lysine methyltransferase family. TRX/MLL subfamily. Interacts with ash1 via its SET domain.

It is found in the nucleus. The catalysed reaction is L-lysyl(9)-[histone H3] + 3 S-adenosyl-L-methionine = N(6),N(6),N(6)-trimethyl-L-lysyl(9)-[histone H3] + 3 S-adenosyl-L-homocysteine + 3 H(+). Its function is as follows. Histone methyltransferase that methylates 'Lys-4' of histone H3 (H3K4me). H3K4me represents a specific tag for epigenetic transcriptional activation. Functions in segment determination through interaction with genes of bithorax (BX-C) and antennapedia (ANT-C) complexes. Acts as an activator of BX-C. Involved in the very early regulation of homeotic genes expressed only in the posterior region of the embryo. This Drosophila virilis (Fruit fly) protein is Histone-lysine N-methyltransferase trithorax (trx).